Reading from the N-terminus, the 753-residue chain is Polyribonucleotide nucleotidyltransferase (753 aa).

Residues Asp-488 and Asp-494 each coordinate Mg(2+). The KH domain maps to 555-614; that stretch reads PKLYTMKINPEKIRDVIGKGGSTIRALTEETGTQIDIGEDGTITIASSDAAKADEAKRRI. One can recognise an S1 motif domain in the interval 624-692; that stretch reads GKIYEGPVTK…EKGRVKLSLK (69 aa). The segment at 692-753 is disordered; sequence KALTERPAGM…EGEQQQQQQQ (62 aa). Residues 699–739 are compositionally biased toward basic and acidic residues; that stretch reads AGMERSDRPAPAEREFRQPREPRQQREFREPREPREPRDGG.

Belongs to the polyribonucleotide nucleotidyltransferase family. Requires Mg(2+) as cofactor.

The protein localises to the cytoplasm. The enzyme catalyses RNA(n+1) + phosphate = RNA(n) + a ribonucleoside 5'-diphosphate. In terms of biological role, involved in mRNA degradation. Catalyzes the phosphorolysis of single-stranded polyribonucleotides processively in the 3'- to 5'-direction. The sequence is that of Polyribonucleotide nucleotidyltransferase from Delftia acidovorans (strain DSM 14801 / SPH-1).